The following is a 409-amino-acid chain: Tryptophan synthase beta chain 1 (409 aa).

The residue at position 104 (Lys104) is an N6-(pyridoxal phosphate)lysine.

It belongs to the TrpB family. In terms of assembly, tetramer of two alpha and two beta chains. Pyridoxal 5'-phosphate serves as cofactor.

The enzyme catalyses (1S,2R)-1-C-(indol-3-yl)glycerol 3-phosphate + L-serine = D-glyceraldehyde 3-phosphate + L-tryptophan + H2O. The protein operates within amino-acid biosynthesis; L-tryptophan biosynthesis; L-tryptophan from chorismate: step 5/5. In terms of biological role, the beta subunit is responsible for the synthesis of L-tryptophan from indole and L-serine. In Nostoc sp. (strain PCC 7120 / SAG 25.82 / UTEX 2576), this protein is Tryptophan synthase beta chain 1 (trpB1).